A 193-amino-acid polypeptide reads, in one-letter code: Putative manganese efflux pump MntP (193 aa).

The next 6 membrane-spanning stretches (helical) occupy residues 6-26 (VIFIALGLSADCFAVSIGIAC), 48-68 (AGMVVIGFFAGLSVIDIISAF), 71-91 (WIAFGLLLFIGVRMIYEALQG), 108-128 (LLGVAVATSIDALAVGLAFAV), 132-152 (NIGLAALLIGLVSLTVSFLGF), and 165-185 (WVGVAGGLVLVFIGLKILAEH).

The protein belongs to the MntP (TC 9.B.29) family.

The protein localises to the cell membrane. Probably functions as a manganese efflux pump. In Dehalococcoides mccartyi (strain ATCC BAA-2100 / JCM 16839 / KCTC 5957 / BAV1), this protein is Putative manganese efflux pump MntP.